The primary structure comprises 101 residues: Growth-regulated alpha protein (101 aa).

An N-terminal signal peptide occupies residues 1–28 (MAPATRSLLRAPLLLLLLLLATSRLATG). 2 cysteine pairs are disulfide-bonded: Cys37–Cys63 and Cys39–Cys79.

The protein belongs to the intercrine alpha (chemokine CxC) family.

Its subcellular location is the secreted. In terms of biological role, has chemotactic activity for neutrophils. In Cricetulus griseus (Chinese hamster), this protein is Growth-regulated alpha protein (CXCL1).